The following is a 276-amino-acid chain: Protein MGF 360-15R (276 aa).

Belongs to the asfivirus MGF 360 family.

Plays a role in virus cell tropism, and may be required for efficient virus replication in macrophages. This is Protein MGF 360-15R from Ornithodoros (relapsing fever ticks).